A 160-amino-acid chain; its full sequence is Ribosomal RNA large subunit methyltransferase H (160 aa).

Residues leucine 76, glycine 108, and 127–132 (LGKMTW) each bind S-adenosyl-L-methionine.

This sequence belongs to the RNA methyltransferase RlmH family. In terms of assembly, homodimer.

It localises to the cytoplasm. It carries out the reaction pseudouridine(1915) in 23S rRNA + S-adenosyl-L-methionine = N(3)-methylpseudouridine(1915) in 23S rRNA + S-adenosyl-L-homocysteine + H(+). Specifically methylates the pseudouridine at position 1915 (m3Psi1915) in 23S rRNA. This Rhizobium rhizogenes (strain K84 / ATCC BAA-868) (Agrobacterium radiobacter) protein is Ribosomal RNA large subunit methyltransferase H.